The chain runs to 135 residues: Small ribosomal subunit protein uS12 (135 aa).

Asp-89 is subject to 3-methylthioaspartic acid. The tract at residues 106 to 135 (GVKDRKQGRSKYGAKRPKPGQAPAAAGKKK) is disordered. Residues 113-123 (GRSKYGAKRPK) are compositionally biased toward basic residues. The span at 124–135 (PGQAPAAAGKKK) shows a compositional bias: low complexity.

The protein belongs to the universal ribosomal protein uS12 family. In terms of assembly, part of the 30S ribosomal subunit. Contacts proteins S8 and S17. May interact with IF1 in the 30S initiation complex.

Its function is as follows. With S4 and S5 plays an important role in translational accuracy. In terms of biological role, interacts with and stabilizes bases of the 16S rRNA that are involved in tRNA selection in the A site and with the mRNA backbone. Located at the interface of the 30S and 50S subunits, it traverses the body of the 30S subunit contacting proteins on the other side and probably holding the rRNA structure together. The combined cluster of proteins S8, S12 and S17 appears to hold together the shoulder and platform of the 30S subunit. The sequence is that of Small ribosomal subunit protein uS12 from Synechococcus sp. (strain JA-3-3Ab) (Cyanobacteria bacterium Yellowstone A-Prime).